Reading from the N-terminus, the 239-residue chain is MKGFIAYIPAGFPDLETTRKILIALNELGITGVEIGVPFSDPVADGPVIQLAHSVALRNGVTMKKILEMLGEISVDYDLYLMSYLNPIVNYPEGKEKLLDELKKLGVKGLIIPDLPLREVKNVNIAYPIVPFVAPNTKDEEIEFINSVQAPFVYYISRYGVTGEREDLPFADHIKRVKERIKLPLFVGFGISRHEQVEKVWEIADGAIVGSALVRIMEESPKDEIPKKVVEKVKELLGK.

Catalysis depends on proton acceptor residues Glu-34 and Asp-45.

This sequence belongs to the TrpA family. In terms of assembly, tetramer of two alpha and two beta chains.

The catalysed reaction is (1S,2R)-1-C-(indol-3-yl)glycerol 3-phosphate + L-serine = D-glyceraldehyde 3-phosphate + L-tryptophan + H2O. Its pathway is amino-acid biosynthesis; L-tryptophan biosynthesis; L-tryptophan from chorismate: step 5/5. Functionally, the alpha subunit is responsible for the aldol cleavage of indoleglycerol phosphate to indole and glyceraldehyde 3-phosphate. This Thermotoga petrophila (strain ATCC BAA-488 / DSM 13995 / JCM 10881 / RKU-1) protein is Tryptophan synthase alpha chain.